A 325-amino-acid polypeptide reads, in one-letter code: Fe-S cluster assembly protein DRE2 (325 aa).

Positions 1-169 (MTLGDRLGLI…KKKDAGNNEQ (169 aa)) are N-terminal SAM-like domain. The linker stretch occupies residues 170-222 (VVKLSVEDVEDDLDDDPEVSNELLSKAKFFNSLSLNQDAEIDENNLIKSTDGD). [2Fe-2S] cluster contacts are provided by cysteine 229, cysteine 240, cysteine 243, and cysteine 245. The segment at 229-245 (CGKTNTKKRRACKDCTC) is fe-S binding site A. Residues cysteine 288, cysteine 291, cysteine 299, and cysteine 302 each contribute to the [4Fe-4S] cluster site. 2 consecutive short sequence motifs (cx2C motif) follow at residues 288-291 (CGSC) and 299-302 (CSGC). Residues 288–302 (CGSCSLGDAFRCSGC) form a fe-S binding site B region.

The protein belongs to the anamorsin family. Monomer. Interacts with TAH18. Interacts with MIA40. The cofactor is [2Fe-2S] cluster. [4Fe-4S] cluster is required as a cofactor.

The protein resides in the cytoplasm. The protein localises to the mitochondrion intermembrane space. Its function is as follows. Component of the cytosolic iron-sulfur (Fe-S) protein assembly (CIA) machinery required for the maturation of extramitochondrial Fe-S proteins. Part of an electron transfer chain functioning in an early step of cytosolic Fe-S biogenesis, facilitating the de novo assembly of a [4Fe-4S] cluster on the scaffold complex CFD1-NBP35. Electrons are transferred to DRE2 from NADPH via the FAD- and FMN-containing protein TAH18. TAH18-DRE2 are also required for the assembly of the diferric tyrosyl radical cofactor of ribonucleotide reductase (RNR), probably by providing electrons for reduction during radical cofactor maturation in the catalytic small subunit RNR2. This Vanderwaltozyma polyspora (strain ATCC 22028 / DSM 70294 / BCRC 21397 / CBS 2163 / NBRC 10782 / NRRL Y-8283 / UCD 57-17) (Kluyveromyces polysporus) protein is Fe-S cluster assembly protein DRE2.